The sequence spans 275 residues: U6 snRNA phosphodiesterase 1 (275 aa).

Positions 1–25 are disordered; the sequence is MEFLKHYEDDEDQDDENNTKDENVN. His122 (proton acceptor) is an active-site residue. AMP-binding positions include 122-124, Tyr206, and 208-214; these read HIS and NPEPHLS. UMP contacts are provided by residues Tyr206 and 210-214; that span reads EPHLS. The active-site Proton donor is the His212.

It belongs to the 2H phosphoesterase superfamily. USB1 family.

Its subcellular location is the nucleus. It carries out the reaction a 3'-end uridylyl-uridine-RNA = a 3'-end 2',3'-cyclophospho-uridine-RNA + uridine. 3'-5' RNA exonuclease that trims the 3' end of oligo(U) tracts of the pre-U6 small nuclear RNA (snRNA) molecule, leading to the formation of a mature U6 snRNA 3' end-terminated with a 2',3'-cyclic phosphate. Participates in the U6 snRNA 3' end processing that prevents U6 snRNA degradation. The polypeptide is U6 snRNA phosphodiesterase 1 (Dictyostelium discoideum (Social amoeba)).